Consider the following 986-residue polypeptide: Ankyrin repeat, PH and SEC7 domain containing protein secG (986 aa).

Residues 1 to 28 show a composition bias toward low complexity; the sequence is MGSTSNSTKNTGSTTTTTTTAAPATTAK. The segment at 1-43 is disordered; that stretch reads MGSTSNSTKNTGSTTTTTTTAAPATTAKHSNSAPTRPSVHYYS. Residues 29-43 are compositionally biased toward polar residues; the sequence is HSNSAPTRPSVHYYS. ANK repeat units follow at residues 34 to 63, 68 to 97, 101 to 131, 135 to 164, 168 to 197, 201 to 230, 234 to 263, 267 to 296, 300 to 329, 334 to 363, 367 to 396, 400 to 429, 433 to 462, 466 to 495, and 499 to 528; these read PTRP…TSPD, EKRT…NANI, AGNT…DVNT, KNGT…DPRA, NGET…KVNA, DCIT…KVDP, HGIS…NINC, EGVT…KINM, MGET…TMID, RQST…QINI, EGAT…PICI, QGAT…ELEV, QGGT…NVNA, HSST…RIDA, and AGKT…DLDQ. In terms of domain architecture, SEC7 spans 580–770; it reads QLAAEKQKLL…ENLYDKIVTN (191 aa). The 112-residue stretch at 784 to 895 folds into the PH domain; it reads HVEKKGWLTK…WVQSIKSNIH (112 aa). The tract at residues 911-986 is disordered; sequence IRGRGKVSTK…PVQQQTSALS (76 aa). A compositionally biased stretch (polar residues) spans 920–929; it reads KPIQNRKQTI. Low complexity-rich tracts occupy residues 936–953 and 963–986; these read TTTT…SVGS and SSGS…SALS.

The protein is Ankyrin repeat, PH and SEC7 domain containing protein secG (secG) of Dictyostelium discoideum (Social amoeba).